The following is a 360-amino-acid chain: tRNA N6-adenosine threonylcarbamoyltransferase (360 aa).

Fe cation contacts are provided by histidine 115 and histidine 119. Residues 137–141 (LVSGG), aspartate 170, glycine 183, and asparagine 283 each bind substrate. Aspartate 311 is a binding site for Fe cation.

It belongs to the KAE1 / TsaD family. Requires Fe(2+) as cofactor.

The protein localises to the cytoplasm. The enzyme catalyses L-threonylcarbamoyladenylate + adenosine(37) in tRNA = N(6)-L-threonylcarbamoyladenosine(37) in tRNA + AMP + H(+). Required for the formation of a threonylcarbamoyl group on adenosine at position 37 (t(6)A37) in tRNAs that read codons beginning with adenine. Is involved in the transfer of the threonylcarbamoyl moiety of threonylcarbamoyl-AMP (TC-AMP) to the N6 group of A37, together with TsaE and TsaB. TsaD likely plays a direct catalytic role in this reaction. The sequence is that of tRNA N6-adenosine threonylcarbamoyltransferase from Rhizobium meliloti (strain 1021) (Ensifer meliloti).